The following is a 316-amino-acid chain: WSCD family member GA21586 (316 aa).

The chain crosses the membrane as a helical span at residues 8 to 28 (FFGVSATIIIYIGGVLFLSMN). 4 N-linked (GlcNAc...) asparagine glycosylation sites follow: Asn-78, Asn-150, Asn-226, and Asn-232.

It belongs to the WSCD family.

The protein resides in the membrane. This Drosophila pseudoobscura pseudoobscura (Fruit fly) protein is WSCD family member GA21586.